A 46-amino-acid chain; its full sequence is Large ribosomal subunit protein bL36 (46 aa).

It belongs to the bacterial ribosomal protein bL36 family.

In Photorhabdus laumondii subsp. laumondii (strain DSM 15139 / CIP 105565 / TT01) (Photorhabdus luminescens subsp. laumondii), this protein is Large ribosomal subunit protein bL36.